A 719-amino-acid polypeptide reads, in one-letter code: Disintegrin and metalloproteinase domain-containing protein 18 (719 aa).

An N-terminal signal peptide occupies residues 1-19; the sequence is MPLLFILAELAMLFARLDS. Residues 20–179 constitute a propeptide that is removed on maturation; sequence EGICLHITVP…QDKNHSQLLP (160 aa). N-linked (GlcNAc...) asparagine glycans are attached at residues asparagine 61, asparagine 75, asparagine 121, asparagine 152, asparagine 173, asparagine 244, and asparagine 331. At 173–683 the chain is on the extracellular side; that stretch reads NHSQLLPQSL…TKRLSKNEDS (511 aa). Residues 180–378 form the Peptidase M12B domain; sequence QSLKLHIIVG…FDTQCLGDLS (199 aa). Disulfide bonds link cysteine 289–cysteine 373, cysteine 332–cysteine 357, and cysteine 334–cysteine 339. N-linked (GlcNAc...) asparagine glycans are attached at residues asparagine 356 and asparagine 405. The 90-residue stretch at 387 to 476 folds into the Disintegrin domain; it reads QAVCGNGIME…HCVPDTFALN (90 aa). An intrachain disulfide couples cysteine 447 to cysteine 468. Asparagine 607, asparagine 614, and asparagine 621 each carry an N-linked (GlcNAc...) asparagine glycan. In terms of domain architecture, EGF-like spans 616 to 650; the sequence is TGNDCNATKKCKGNGICNNFGNCQCFPDYRPPDCN. Disulfide bonds link cysteine 620-cysteine 632, cysteine 626-cysteine 638, and cysteine 640-cysteine 649. A helical transmembrane segment spans residues 684–704; it reads WVILGFFIFLPFIVTFLVGIM. The Cytoplasmic portion of the chain corresponds to 705–719; it reads KRNERKIVPQGEHKI.

In terms of processing, the prodomain and the metalloprotease-like domain are cleaved during the epididymal maturation of the spermatozoa. As to expression, expressed specifically in testis.

It is found in the membrane. In terms of biological role, sperm surface membrane protein that may be involved in spermatogenesis and fertilization. This is a non catalytic metalloprotease-like protein. The chain is Disintegrin and metalloproteinase domain-containing protein 18 (Adam18) from Mus musculus (Mouse).